An 80-amino-acid polypeptide reads, in one-letter code: Metallothionein-like protein 1 (80 aa).

The protein belongs to the metallothionein superfamily. Type 15 family.

In terms of biological role, metallothioneins have a high content of cysteine residues that bind various heavy metals. This Coffea arabica (Arabian coffee) protein is Metallothionein-like protein 1 (METAL1).